The chain runs to 204 residues: Large ribosomal subunit protein bL25 (204 aa).

Residues 1–20 (MSETYELKAETRDRVGKGSS) are disordered.

Belongs to the bacterial ribosomal protein bL25 family. CTC subfamily. As to quaternary structure, part of the 50S ribosomal subunit; part of the 5S rRNA/L5/L18/L25 subcomplex. Contacts the 5S rRNA. Binds to the 5S rRNA independently of L5 and L18.

Functionally, this is one of the proteins that binds to the 5S RNA in the ribosome where it forms part of the central protuberance. The protein is Large ribosomal subunit protein bL25 of Rhizobium meliloti (strain 1021) (Ensifer meliloti).